We begin with the raw amino-acid sequence, 178 residues long: Ribosome maturation factor RimM (178 aa).

In terms of domain architecture, PRC barrel spans 100 to 173 (ADEYFIHQLY…QIVVRLLPGL (74 aa)).

It belongs to the RimM family. In terms of assembly, binds ribosomal protein uS19.

It localises to the cytoplasm. An accessory protein needed during the final step in the assembly of 30S ribosomal subunit, possibly for assembly of the head region. Essential for efficient processing of 16S rRNA. May be needed both before and after RbfA during the maturation of 16S rRNA. It has affinity for free ribosomal 30S subunits but not for 70S ribosomes. This chain is Ribosome maturation factor RimM, found in Roseiflexus castenholzii (strain DSM 13941 / HLO8).